The chain runs to 390 residues: Acid protease (390 aa).

The N-terminal stretch at 1-18 (MLFSKSLLLSVLASLSFA) is a signal peptide. The region spanning 75 to 386 (YLTTIEIGTP…DIDNSQVGIA (312 aa)) is the Peptidase A1 domain. Residues D93 and D282 contribute to the active site.

It belongs to the peptidase A1 family.

This Saccharomycopsis fibuligera (Yeast) protein is Acid protease (PEP1).